Here is a 273-residue protein sequence, read N- to C-terminus: Bis(5'-nucleosyl)-tetraphosphatase, symmetrical (273 aa).

Belongs to the Ap4A hydrolase family.

It catalyses the reaction P(1),P(4)-bis(5'-adenosyl) tetraphosphate + H2O = 2 ADP + 2 H(+). In terms of biological role, hydrolyzes diadenosine 5',5'''-P1,P4-tetraphosphate to yield ADP. This chain is Bis(5'-nucleosyl)-tetraphosphatase, symmetrical, found in Aromatoleum aromaticum (strain DSM 19018 / LMG 30748 / EbN1) (Azoarcus sp. (strain EbN1)).